Reading from the N-terminus, the 270-residue chain is Checkpoint signal transducer rad25 (270 aa).

Residues Ser234 and Ser253 each carry the phosphoserine modification. The tract at residues 240-270 is disordered; that stretch reads QSAKEEAPAAAAASENEHPEPKESTTDTVKA. Residues 254 to 270 show a composition bias toward basic and acidic residues; that stretch reads ENEHPEPKESTTDTVKA.

It belongs to the 14-3-3 family. As to quaternary structure, interacts with rad24. Interacts with byr2.

It localises to the cytoplasm. Functionally, acts in cell cycle and stress checkpoint signaling by sequestering signal transducers regulated by the checkpoints. Required for the DNA damage checkpoint that ensures that DNA damage is repaired before mitosis is attempted. Sequesters byr2 in the cytoplasm to prevent its translocation to the plasma membrane. The sequence is that of Checkpoint signal transducer rad25 from Schizosaccharomyces pombe (strain 972 / ATCC 24843) (Fission yeast).